The following is a 468-amino-acid chain: MTTALYLPEENIDMIAATSVLQQQAADIRTRTINWASYMQSQMISEEDYKAISALDKSRASFLAQNSSQVVKTLLNLVSHLSKDSTIQYILVLLDDLLQEDRSRVDLFHDTAGKLKQCIWGPFLNLLNRQDGFIVNMSSRILAKFACWGHETMPKSDLNFYLQFLKDQLASNNNEYIQSVARCLQMMLRVDEYRFAFVGVDGISTLIRILSTRVNFQVQYQLIFCLWVLTFNPLLAAKMNKFSVIPILADILSDCAKEKVTRIILAVFRNLIEKPEDSSVAKDHCIAMVQCKVLKQLSILEQRRFDDEDITADVEYLSEKLQNSVQDLSSFDEYATEVRSGRLEWSPVHKSAKFWRENAQRLNEKNYELLRILVHLLETSKDAIILSVACFDIGEYVRHYPRGKHVLEQLGGKQIVMQHLGHEDPNVRYEALLAVQKLMVHNWEYLGKQLEKENENQKQGAAPIAGKA.

Belongs to the V-ATPase H subunit family. V-ATPase is a heteromultimeric enzyme made up of two complexes: the ATP-hydrolytic V1 complex and the proton translocation V0 complex. The V1 complex consists of three catalytic AB heterodimers that form a heterohexamer, three peripheral stalks each consisting of EG heterodimers, one central rotor including subunits D and F, and the regulatory subunits C and H. The proton translocation complex V0 consists of the proton transport subunit a, a ring of proteolipid subunits c9c'', rotary subunit d, subunits e and f, and the accessory subunits VhaAC45 and ATP6AP2.

Subunit of the V1 complex of vacuolar(H+)-ATPase (V-ATPase), a multisubunit enzyme composed of a peripheral complex (V1) that hydrolyzes ATP and a membrane integral complex (V0) that translocates protons. V-ATPase is responsible for acidifying and maintaining the pH of intracellular compartments and in some cell types, is targeted to the plasma membrane, where it is responsible for acidifying the extracellular environment. Subunit H is essential for V-ATPase activity, but not for the assembly of the complex. The sequence is that of V-type proton ATPase subunit H (VhaSFD) from Drosophila melanogaster (Fruit fly).